We begin with the raw amino-acid sequence, 59 residues long: Ferredoxin (59 aa).

4Fe-4S ferredoxin-type domains lie at 2-30 (GKIT…LEVN) and 31-59 (DHVE…LKVE). [4Fe-4S] cluster contacts are provided by cysteine 12, cysteine 15, cysteine 18, cysteine 22, cysteine 41, cysteine 44, cysteine 47, and cysteine 51.

[4Fe-4S] cluster serves as cofactor.

Its function is as follows. Ferredoxins are iron-sulfur proteins that transfer electrons in a wide variety of metabolic reactions. The chain is Ferredoxin from Entamoeba histolytica (strain ATCC 30459 / HM-1:IMSS / ABRM).